The chain runs to 333 residues: Photosystem II assembly protein Ycf48 (333 aa).

Positions 1 to 25 (MRVKMFKPLRLVLLIAVSVLLMAAR) are cleaved as a signal peptide.

Belongs to the Ycf48 family. Part of early PSII assembly complexes which includes D1 (psbA) and PsbI; not found in mature PSII. Binds to the lumenal side of PSII complexes. Interacts with YidC.

It is found in the cellular thylakoid lumen. A factor required for optimal assembly of photosystem II (PSII), acting in the early stages of PSII assembly. Also plays a role in replacement of photodamaged D1 (psbA). Assists YidC in synthesis of chlorophyll-binding proteins. The chain is Photosystem II assembly protein Ycf48 from Synechococcus sp. (strain JA-2-3B'a(2-13)) (Cyanobacteria bacterium Yellowstone B-Prime).